A 309-amino-acid polypeptide reads, in one-letter code: N(5)-(carboxyethyl)ornithine synthase (309 aa).

Pyruvate is bound by residues arginine 15, lysine 71, and histidine 92. 171–176 (GSGNVA) is an NADP(+) binding site.

This sequence belongs to the AlaDH/PNT family. CEOS subfamily. As to quaternary structure, homotetramer.

It carries out the reaction N(5)-[1(S)-1-carboxyethyl]-L-ornithine + NADP(+) + H2O = L-ornithine + pyruvate + NADPH + H(+). Catalyzes the NADPH-dependent reductive condensation between pyruvic acid and the side chain amino group of L-ornithine to form N(5)-(L-1-carboxyethyl)-L-ornithine. To a lesser extent, can also use L-lysine as substrate (yielding N(6)-(L-1-carboxyethyl)-L-lysine). This is N(5)-(carboxyethyl)ornithine synthase (ceo) from Lactococcus lactis subsp. lactis (strain IL1403) (Streptococcus lactis).